Here is a 686-residue protein sequence, read N- to C-terminus: Eukaryotic translation initiation factor 3 subunit B (686 aa).

The interval 1–29 is disordered; sequence MAKKHAGADANDSDYNEEPNFEDPPGFVD. The segment covering 11–21 has biased composition (acidic residues); sequence NDSDYNEEPNF. The region spanning 53–137 is the RRM domain; it reads SVVVVDNIPK…HTFAVNLFTD (85 aa). WD repeat units lie at residues 203 to 242, 289 to 327, 330 to 365, 438 to 480, and 526 to 571; these read TRER…KIQK, DGMS…LLDL, IKIP…TLME, EIRE…KPSL, and PDHF…IKRT. Residues 590–642 are a coiled coil; the sequence is AEEKQKEIKKNLKKYYAVFEQKDRLRLTRASKELLEKRAQLRETFMEYRNKRI.

Belongs to the eIF-3 subunit B family. As to quaternary structure, component of the eukaryotic translation initiation factor 3 (eIF-3) complex. The eIF-3 complex interacts with pix. Interacts with mxt.

The protein resides in the cytoplasm. In terms of biological role, RNA-binding component of the eukaryotic translation initiation factor 3 (eIF-3) complex, which is involved in protein synthesis of a specialized repertoire of mRNAs and, together with other initiation factors, stimulates binding of mRNA and methionyl-tRNAi to the 40S ribosome. The eIF-3 complex specifically targets and initiates translation of a subset of mRNAs involved in cell proliferation. The chain is Eukaryotic translation initiation factor 3 subunit B from Drosophila ananassae (Fruit fly).